A 155-amino-acid chain; its full sequence is Cytochrome c-550 (155 aa).

The first 20 residues, 1–20 (MKISIYATLAAITLALPAAA), serve as a signal peptide directing secretion. A Pyrrolidone carboxylic acid modification is found at Gln21. Residues Cys35, Cys38, His39, and Met120 each contribute to the heme c site. The propeptide occupies 150-155 (AEGESN).

Post-translationally, binds 1 heme c group covalently per subunit.

The protein is Cytochrome c-550 (cycA) of Paracoccus denitrificans.